The sequence spans 360 residues: Glutamate 5-kinase (360 aa).

Residue K7 coordinates ATP. Residues S47, D134, and N146 each coordinate substrate. Residues 166-167 and 210-216 each bind ATP; these read TD and TGGISTK. The 82-residue stretch at 275–356 folds into the PUA domain; the sequence is VGKITLDDGA…SSIIVVHRDV (82 aa).

The protein belongs to the glutamate 5-kinase family.

Its subcellular location is the cytoplasm. It catalyses the reaction L-glutamate + ATP = L-glutamyl 5-phosphate + ADP. It participates in amino-acid biosynthesis; L-proline biosynthesis; L-glutamate 5-semialdehyde from L-glutamate: step 1/2. Catalyzes the transfer of a phosphate group to glutamate to form L-glutamate 5-phosphate. The chain is Glutamate 5-kinase from Prochlorococcus marinus (strain MIT 9301).